A 483-amino-acid polypeptide reads, in one-letter code: Threonine synthase-like 2 (483 aa).

Lys-113 carries the N6-(pyridoxal phosphate)lysine modification.

Belongs to the threonine synthase family. The cofactor is pyridoxal 5'-phosphate.

Functionally, acts as a catabolic phospho-lyase on both gamma- and beta-phosphorylated substrates. Degrades O-phospho-threonine (PThr) to alpha-ketobutyrate, ammonia and phosphate. Also degrades O-phospho-homoserine (PHS), but this is not its physiological substrate. The protein is Threonine synthase-like 2 (Thnsl2) of Mus musculus (Mouse).